Here is a 505-residue protein sequence, read N- to C-terminus: 2,3-bisphosphoglycerate-independent phosphoglycerate mutase (505 aa).

Mn(2+) is bound by residues aspartate 11 and serine 61. The active-site Phosphoserine intermediate is the serine 61. Residues histidine 122, arginine 152–aspartate 153, arginine 184, arginine 190, arginine 258–arginine 261, and lysine 331 each bind substrate. Positions 396, 400, 437, 438, and 455 each coordinate Mn(2+).

Belongs to the BPG-independent phosphoglycerate mutase family. As to quaternary structure, monomer. Requires Mn(2+) as cofactor.

It carries out the reaction (2R)-2-phosphoglycerate = (2R)-3-phosphoglycerate. It participates in carbohydrate degradation; glycolysis; pyruvate from D-glyceraldehyde 3-phosphate: step 3/5. Its function is as follows. Catalyzes the interconversion of 2-phosphoglycerate and 3-phosphoglycerate. This is 2,3-bisphosphoglycerate-independent phosphoglycerate mutase from Mesomycoplasma hyopneumoniae (strain 7448) (Mycoplasma hyopneumoniae).